The sequence spans 188 residues: uncharacterized protein (188 aa).

Ser-14 carries the post-translational modification Phosphoserine. The tract at residues 165–188 (RQAMAAKRNRFRKNVRKLPNKKKH) is disordered. The span at 171-188 (KRNRFRKNVRKLPNKKKH) shows a compositional bias: basic residues.

Its subcellular location is the nucleus. It localises to the nucleolus. This is an uncharacterized protein from Schizosaccharomyces pombe (strain 972 / ATCC 24843) (Fission yeast).